The following is a 616-amino-acid chain: Zinc metalloproteinase-disintegrin-like VLAIP-A (616 aa).

The first 20 residues, 1–20 (MMQVLLVTISLAVFPYQGSS), serve as a signal peptide directing secretion. The propeptide occupies 21–194 (IILESGNVND…KASQLNLTPE (174 aa)). At Q195 the chain carries Pyrrolidone carboxylic acid. Residues 203-399 (KYIKLVIVAD…KMPQCILNKP (197 aa)) enclose the Peptidase M12B domain. Cystine bridges form between C314–C394, C354–C378, and C356–C361. Position 339 (H339) interacts with Zn(2+). The active site involves E340. Positions 343 and 349 each coordinate Zn(2+). A glycan (N-linked (GlcNAc...) asparagine) is linked at N377. Residues 407–493 (PAVCGNYLVE…ECPTDQFQRN (87 aa)) enclose the Disintegrin domain. Ca(2+) contacts are provided by V409, N412, L414, E416, E419, and D422. 14 cysteine pairs are disulfide-bonded: C410–C439, C421–C434, C423–C429, C433–C456, C447–C453, C452–C478, C465–C485, C472–C504, C497–C509, C516–C566, C531–C577, C544–C554, C561–C603, and C597–C609. The short motif at 471 to 473 (ECD) is the D/ECD-tripeptide element.

This sequence belongs to the venom metalloproteinase (M12B) family. P-III subfamily. P-IIIc sub-subfamily. In terms of assembly, heterodimer; disulfide-linked. Requires Zn(2+) as cofactor. Post-translationally, the N-terminus is blocked. In terms of tissue distribution, expressed by the venom gland.

Its subcellular location is the secreted. Its activity is regulated as follows. Inhibited by EDTA or 1,10-phenanthroline. Not inhibited by PMSF. Snake venom zinc metalloprotease that hydrolyzes the alpha-chain (FGA) and more slowly the beta-chain (FGB) of fibrinogen, without affecting the gamma-chain. Cleaves alpha-chain of fibrinogen at '432-Lys-|-Leu-433' and '535-Pro-|-Met-536' bonds. Induces apoptosis in vascular endothelial cells and inhibits endothelial cell adhesion to extracellular matrix proteins such as fibrinogen, fibronectin, vitronectin, collagen I, and collagen IV. Also hydrolyzes azocasein, and insulin B-chain (at the '38-Ala-|-Leu-39' bond). This Macrovipera lebetinus (Levantine viper) protein is Zinc metalloproteinase-disintegrin-like VLAIP-A.